Reading from the N-terminus, the 509-residue chain is Methionine--tRNA ligase (509 aa).

The 'HIGH' region motif lies at 12-22; sequence YYVNDVPHIGH. Residues 295–299 carry the 'KMSKS' region motif; it reads KISKS. Lysine 298 lines the ATP pocket.

It belongs to the class-I aminoacyl-tRNA synthetase family. MetG type 2B subfamily. In terms of assembly, monomer.

Its subcellular location is the cytoplasm. The enzyme catalyses tRNA(Met) + L-methionine + ATP = L-methionyl-tRNA(Met) + AMP + diphosphate. Is required not only for elongation of protein synthesis but also for the initiation of all mRNA translation through initiator tRNA(fMet) aminoacylation. The polypeptide is Methionine--tRNA ligase (Rickettsia bellii (strain RML369-C)).